A 58-amino-acid polypeptide reads, in one-letter code: Small ribosomal subunit protein bS21 (58 aa).

Belongs to the bacterial ribosomal protein bS21 family.

This chain is Small ribosomal subunit protein bS21, found in Latilactobacillus sakei subsp. sakei (strain 23K) (Lactobacillus sakei subsp. sakei).